The sequence spans 136 residues: Psoriasis susceptibility 1 candidate gene 2 protein (136 aa).

The signal sequence occupies residues 1–22; sequence MILNWKLLGILVLCLHTRGISG. The tract at residues 20-136 is disordered; it reads ISGSEGHPSH…DLDPPREEYR (117 aa). Composition is skewed to pro residues over residues 44–69 and 84–116; these read PQGP…PTRP and PEPP…PPAP. The segment covering 118–136 has biased composition (basic and acidic residues); it reads VDNRPQEEPDLDPPREEYR.

As to expression, expressed in skin. Also expressed in heart and skeletal muscle.

The protein localises to the secreted. The chain is Psoriasis susceptibility 1 candidate gene 2 protein (PSORS1C2) from Homo sapiens (Human).